A 466-amino-acid polypeptide reads, in one-letter code: Soluble pyridine nucleotide transhydrogenase (466 aa).

36 to 45 (ERYNNVGGGC) is an FAD binding site.

The protein belongs to the class-I pyridine nucleotide-disulfide oxidoreductase family. FAD serves as cofactor.

The protein localises to the cytoplasm. The enzyme catalyses NAD(+) + NADPH = NADH + NADP(+). Its function is as follows. Conversion of NADPH, generated by peripheral catabolic pathways, to NADH, which can enter the respiratory chain for energy generation. This is Soluble pyridine nucleotide transhydrogenase from Yersinia pseudotuberculosis serotype O:1b (strain IP 31758).